Here is a 361-residue protein sequence, read N- to C-terminus: Chorismate synthase (361 aa).

Residues R48 and R54 each contribute to the NADP(+) site. FMN is bound by residues 125 to 127 (RSS), 238 to 239 (NA), G278, 293 to 297 (KPTSS), and R319.

This sequence belongs to the chorismate synthase family. Homotetramer. FMNH2 serves as cofactor.

The enzyme catalyses 5-O-(1-carboxyvinyl)-3-phosphoshikimate = chorismate + phosphate. The protein operates within metabolic intermediate biosynthesis; chorismate biosynthesis; chorismate from D-erythrose 4-phosphate and phosphoenolpyruvate: step 7/7. Catalyzes the anti-1,4-elimination of the C-3 phosphate and the C-6 proR hydrogen from 5-enolpyruvylshikimate-3-phosphate (EPSP) to yield chorismate, which is the branch point compound that serves as the starting substrate for the three terminal pathways of aromatic amino acid biosynthesis. This reaction introduces a second double bond into the aromatic ring system. The protein is Chorismate synthase of Vibrio campbellii (strain ATCC BAA-1116).